The following is a 392-amino-acid chain: Mycofactocin maturase MftC (392 aa).

Positions 18 to 228 (LDAPICLTWE…YDWLVAKGDR (211 aa)) constitute a Radical SAM core domain. [4Fe-4S] cluster-binding residues include C32, C36, C39, C253, C260, C271, C312, C315, C321, C325, and C343. Over residues 354–367 (KERVKPKPSGDHSR) the composition is skewed to basic and acidic residues. The tract at residues 354–377 (KERVKPKPSGDHSRGTKQGPVALK) is disordered.

Belongs to the radical SAM superfamily. MftC family. Requires [4Fe-4S] cluster as cofactor.

The enzyme catalyses [mycofactocin precursor peptide]-C-terminal glycyl-L-valyl-L-tyrosine + S-adenosyl-L-methionine = [mycofactocin precursor peptide]-C-terminal glycyl-N-{[2-(4-hydroxyphenyl)ethenyl]-3-methylbutanamide} + 5'-deoxyadenosine + L-methionine + CO2. It carries out the reaction [mycofactocin precursor peptide]-C-terminal glycyl-N-{[2-(4-hydroxyphenyl)ethenyl]-3-methylbutanamide} + AH2 + S-adenosyl-L-methionine = [mycofactocin precursor peptide]-C-terminal glycyl-N-{5-[(4-hydroxyphenyl)methyl]-4,4-dimethyl-2-oxopyrrolidin-3-yl}acetamide + 5'-deoxyadenosine + L-methionine + A + H(+). Functionally, radical S-adenosylmethionine (SAM) enzyme responsible for the first step of the biosynthesis of the enzyme cofactor mycofactocin (MFT). Catalyzes two reactions at the C-terminus of the mycofactocin precursor (the MftA peptide). The first one is the oxidative decarboxylation of the C-terminal L-tyrosine of MftA, forming an unsaturated tyramine moiety. The second reaction is the cross-linking of the tyramine with the penultimate L-valine residue, forming a five-membered lactam ring. Its activity requires the presence of the MftB chaperone. Is required for the in vivo ethanol assimilation in M.smegmatis. The polypeptide is Mycofactocin maturase MftC (Mycolicibacterium smegmatis (strain ATCC 700084 / mc(2)155) (Mycobacterium smegmatis)).